The primary structure comprises 127 residues: MAQSVPPGDIQTQPGTKIVFNAPYDDKHTYHIKVINSSARRIVYGIKTTNMKRLGVDPPCGVLDPKEAVLLAVSCDAFAFGQEDTNNDRITVEWTNTPDGAAKQFRREWFQGDGMVRRKNLPIEYNP.

The residue at position 2 (A2) is an N-acetylalanine. Residues 9-126 (DIQTQPGTKI…RRKNLPIEYN (118 aa)) enclose the MSP domain.

Sperm.

It localises to the cell projection. It is found in the pseudopodium. The protein localises to the cytoplasm. Its subcellular location is the cytoskeleton. Its function is as follows. Central component in molecular interactions underlying sperm crawling. Forms an extensive filament system that extends from sperm villipoda, along the leading edge of the pseudopod. This Caenorhabditis elegans protein is Major sperm protein 55/57 (msp-55).